The chain runs to 428 residues: Enolase (428 aa).

Residue Gln163 coordinates (2R)-2-phosphoglycerate. The active-site Proton donor is the Glu205. 3 residues coordinate Mg(2+): Asp242, Glu285, and Asp312. Positions 337, 366, 367, and 388 each coordinate (2R)-2-phosphoglycerate. Lys337 functions as the Proton acceptor in the catalytic mechanism.

Belongs to the enolase family. Requires Mg(2+) as cofactor.

The protein resides in the cytoplasm. It is found in the secreted. The protein localises to the cell surface. The catalysed reaction is (2R)-2-phosphoglycerate = phosphoenolpyruvate + H2O. It functions in the pathway carbohydrate degradation; glycolysis; pyruvate from D-glyceraldehyde 3-phosphate: step 4/5. Catalyzes the reversible conversion of 2-phosphoglycerate (2-PG) into phosphoenolpyruvate (PEP). It is essential for the degradation of carbohydrates via glycolysis. The sequence is that of Enolase from Rhodopirellula baltica (strain DSM 10527 / NCIMB 13988 / SH1).